A 78-amino-acid chain; its full sequence is MVLVTCNRALAQGDFCLLALIFCHQTCRTPEKHKASQSSAKLVSINISLITSHHRLRHPRRRQHHHRNNFAPTNWYWG.

This is an uncharacterized protein from Plasmodium falciparum (isolate fcm17 / Senegal).